Here is a 211-residue protein sequence, read N- to C-terminus: Mitotic spindle assembly checkpoint protein MAD2B (211 aa).

An HORMA domain is found at 13-203; it reads QVVADVLSEF…SDILKMQLYV (191 aa). Residues 21–155 are mediates interaction with REV1 and REV3L and homodimerization; that stretch reads EFLEVAVHLI…FTVLVHTREA (135 aa).

Homooligomer. Heterodimer with REV3L. This dimer forms the minimal DNA polymerase zeta complex (Pol-zeta2), with REV3L bearing DNA polymerase catalytic activity, although its activity is very low in this context. Component of the tetrameric Pol-zeta complex (Pol-zeta4), which consists of REV3L, MAD2L2, POLD2 and POLD3; Pol-zeta4 is the fully active form of DNA polymerase zeta. Component of the shieldin complex, consisting of SHLD1, SHLD2, SHLD3 and MAD2L2/REV7. Within the complex, SHLD2 forms a scaffold which interacts with a SHLD3-MAD2L2 subcomplex via its N-terminus, and with SHLD1 via its C-terminus. Interacts with REV1. Interacts with ADAM9. Interacts with CHAMP1. Interacts with FZR1 (in complex with the anaphase promoting complex APC). May interact with CDC20. Interacts with RAN. Interacts with ELK1; the interaction is direct and recruits MAD2L2 to ELK1-specific promoters. May interact with the JNK kinases MAPK8 and/or MAPK9 to stimulate ELK1 phosphorylation and transcriptional activity upon DNA damage. Interacts with TCF7L2; prevents its binding to promoters and negatively modulates its transcriptional activity. Interacts with YY1AP1. Interacts with PRCC; the interaction is direct. Interacts with POGZ. Interacts with ASTE1.

Its subcellular location is the nucleus. The protein localises to the cytoplasm. It localises to the cytoskeleton. The protein resides in the spindle. Functionally, adapter protein able to interact with different proteins and involved in different biological processes. Mediates the interaction between the error-prone DNA polymerase zeta catalytic subunit REV3L and the inserter polymerase REV1, thereby mediating the second polymerase switching in translesion DNA synthesis. Translesion DNA synthesis releases the replication blockade of replicative polymerases, stalled in presence of DNA lesions. Component of the shieldin complex, which plays an important role in repair of DNA double-stranded breaks (DSBs). During G1 and S phase of the cell cycle, the complex functions downstream of TP53BP1 to promote non-homologous end joining (NHEJ) and suppress DNA end resection. Mediates various NHEJ-dependent processes including immunoglobulin class-switch recombination, and fusion of unprotected telomeres. May also regulate another aspect of cellular response to DNA damage through regulation of the JNK-mediated phosphorylation and activation of the transcriptional activator ELK1. Inhibits the FZR1- and probably CDC20-mediated activation of the anaphase promoting complex APC thereby regulating progression through the cell cycle. Regulates TCF7L2-mediated gene transcription and may play a role in epithelial-mesenchymal transdifferentiation. The protein is Mitotic spindle assembly checkpoint protein MAD2B (Mad2l2) of Rattus norvegicus (Rat).